Reading from the N-terminus, the 355-residue chain is MAPSVTIDNSSDFSPITTNFKTTSFNPRTLLLAPPSIASHEEKLRNVLATHDRTVTDLQMLDRLSAGLVTLPESTYDLVLILTDADGTRVESKGLLTRDVFGKITQALKAGAKLQAQDGTFGQEIDGAEYQEAILSGLVAEGGVMLKPDYSASVAVPLRLRRKDNSKNAAVSSAGPAVSMAAVPLHGKRKSVDMTDDVPEKDVPKVDSPKNDAPKGVGFIDFSDDFDAEDDDDELIDEDTLLTEEDMKKPLAIPPECAPRAGKRRRACKDCTCGLAEKLAKEDADKRATADSQLQALKLDADDLAEVDFTVQGKVGSCGNCSLGDAFRCDGCPYIGMPAFKPGEEVRLLNNDVQL.

The segment at 23 to 156 is N-terminal SAM-like domain; sequence TSFNPRTLLL…KPDYSASVAV (134 aa). The interval 157-247 is linker; the sequence is PLRLRRKDNS…EDTLLTEEDM (91 aa). A disordered region spans residues 189-214; sequence RKSVDMTDDVPEKDVPKVDSPKNDAP. The segment covering 190–213 has biased composition (basic and acidic residues); it reads KSVDMTDDVPEKDVPKVDSPKNDA. Residues Cys-257, Cys-268, Cys-271, and Cys-273 each contribute to the [2Fe-2S] cluster site. Positions 257 to 273 are fe-S binding site A; the sequence is CAPRAGKRRRACKDCTC. [4Fe-4S] cluster is bound by residues Cys-318, Cys-321, Cys-329, and Cys-332. Short sequence motifs (cx2C motif) lie at residues 318-321 and 329-332; these read CGNC and CDGC. Positions 318 to 332 are fe-S binding site B; sequence CGNCSLGDAFRCDGC.

This sequence belongs to the anamorsin family. In terms of assembly, monomer. Interacts with TAH18. Interacts with MIA40. It depends on [2Fe-2S] cluster as a cofactor. [4Fe-4S] cluster serves as cofactor.

It localises to the cytoplasm. It is found in the mitochondrion intermembrane space. Functionally, component of the cytosolic iron-sulfur (Fe-S) protein assembly (CIA) machinery required for the maturation of extramitochondrial Fe-S proteins. Part of an electron transfer chain functioning in an early step of cytosolic Fe-S biogenesis, facilitating the de novo assembly of a [4Fe-4S] cluster on the scaffold complex CFD1-NBP35. Electrons are transferred to DRE2 from NADPH via the FAD- and FMN-containing protein TAH18. TAH18-DRE2 are also required for the assembly of the diferric tyrosyl radical cofactor of ribonucleotide reductase (RNR), probably by providing electrons for reduction during radical cofactor maturation in the catalytic small subunit RNR2. The polypeptide is Fe-S cluster assembly protein DRE2 (Botryotinia fuckeliana (strain B05.10) (Noble rot fungus)).